Here is a 1026-residue protein sequence, read N- to C-terminus: Retinoblastoma-related protein 1 (1026 aa).

Residues 416 to 616 (TPVSTAMTTA…EKGSSMYNSL (201 aa)) are domain A. The segment at 416–872 (TPVSTAMTTA…NEVFIPSVKP (457 aa)) is pocket. Positions 617–737 (AVARPALSVE…PGGGGETCAE (121 aa)) are spacer. The segment at 656-680 (PVPSLPKPEPMSAQNGDPRSPKRPC) is disordered. The segment at 738–872 (TGISVFFSKI…NEVFIPSVKP (135 aa)) is domain B. A disordered region spans residues 1007-1026 (QNGSSASSSGAPLKSEQPDS).

This sequence belongs to the retinoblastoma protein (RB) family.

It is found in the nucleus. Regulator of biological processes that recruits a histone deacetylase to control gene transcription. May play a role in the entry into mitosis, negatively regulating the cell proliferation. Formation of stable complexes with geminiviridae replication-associated proteins may create a cellular environment which favors viral DNA replication. The polypeptide is Retinoblastoma-related protein 1 (RBR1) (Pisum sativum (Garden pea)).